A 213-amino-acid polypeptide reads, in one-letter code: MLTIILLLIASYLLGAIPFGLWIGKIFFKKNLHDYGSGNTGTTNTFRILGVKAGISVFAFDLLKGTLATLLPLFFHINGVSPLIFGLLAVIGHTFSIFDRFKGGKAVATSAGVILGFSPLFLIYLLVVFIIVLWLFSMISLSSVIGAVFALLGILIFPSIGFILTSYDLLFSIIIFVLAIIIILRHRTNLKRIKNHCESLVPFGLNLSKQKEK.

6 consecutive transmembrane segments (helical) span residues 4–24 (IILLLIASYLLGAIPFGLWIG), 48–68 (ILGVKAGISVFAFDLLKGTLA), 71–91 (LPLFFHINGVSPLIFGLLAVI), 113–133 (VILGFSPLFLIYLLVVFIIVL), 144–164 (VIGAVFALLGILIFPSIGFIL), and 165–185 (TSYDLLFSIIIFVLAIIIILR).

Belongs to the PlsY family. In terms of assembly, probably interacts with PlsX.

Its subcellular location is the cell membrane. It catalyses the reaction an acyl phosphate + sn-glycerol 3-phosphate = a 1-acyl-sn-glycero-3-phosphate + phosphate. The protein operates within lipid metabolism; phospholipid metabolism. In terms of biological role, catalyzes the transfer of an acyl group from acyl-phosphate (acyl-PO(4)) to glycerol-3-phosphate (G3P) to form lysophosphatidic acid (LPA). This enzyme utilizes acyl-phosphate as fatty acyl donor, but not acyl-CoA or acyl-ACP. The chain is Glycerol-3-phosphate acyltransferase from Lactococcus lactis subsp. lactis (strain IL1403) (Streptococcus lactis).